The chain runs to 638 residues: Intron-encoded RNA maturase bI4 (638 aa).

Residues 1–253 (MAFRKSNVYL…VFYSPNTLGQ (253 aa)) form a COB exons 1 to 4 encoded region. Residues 253-638 (QNMALLLITY…LKFNEKWNNN (386 aa)) form a COB intron 4 encoded region.

This sequence in the C-terminal section; belongs to the LAGLIDADG endonuclease family. In terms of assembly, forms a ternary complex with intron derived RNA and the imported mitochondrial leucyl-tRNA synthetase NAM2. The proteins do not interact directly with each other. The mature protein may arise from proteolytic cleavage of an in-frame translation of COB exons 1 to 4 plus intron 4, containing the bI4 open reading frame. Cleavage would take place close to the Met-385 resulting in an active maturase of about 30 kDa.

The protein localises to the mitochondrion. Its function is as follows. Mitochondrial mRNA maturase required for splicing of intron 4 of the cytochrome b (COB) gene, containing its own coding sequence, and intron 4 in COX1, coding for the related homing endonuclease aI4. In vivo splicing requires in addition the imported mitochondrial leucyl-tRNA synthetase NAM2. Both proteins seem to stimulate the intrinsic ribozyme activity of intron bI4 through binding to and stabilizing specific secondary and tertiary structure elements in the RNA. The protein is Intron-encoded RNA maturase bI4 (BI4) of Saccharomyces cerevisiae (strain ATCC 204508 / S288c) (Baker's yeast).